The primary structure comprises 361 residues: tRNA/tmRNA (uracil-C(5))-methyltransferase (361 aa).

S-adenosyl-L-methionine is bound by residues Gln-183, Tyr-211, Asn-216, Glu-232, and Asp-294. The active-site Nucleophile is Cys-319. Residue Glu-353 is the Proton acceptor of the active site.

This sequence belongs to the class I-like SAM-binding methyltransferase superfamily. RNA M5U methyltransferase family. TrmA subfamily.

It catalyses the reaction uridine(54) in tRNA + S-adenosyl-L-methionine = 5-methyluridine(54) in tRNA + S-adenosyl-L-homocysteine + H(+). The enzyme catalyses uridine(341) in tmRNA + S-adenosyl-L-methionine = 5-methyluridine(341) in tmRNA + S-adenosyl-L-homocysteine + H(+). Its function is as follows. Dual-specificity methyltransferase that catalyzes the formation of 5-methyluridine at position 54 (m5U54) in all tRNAs, and that of position 341 (m5U341) in tmRNA (transfer-mRNA). This is tRNA/tmRNA (uracil-C(5))-methyltransferase from Acinetobacter baumannii (strain AB307-0294).